We begin with the raw amino-acid sequence, 133 residues long: Small ribosomal subunit protein uS8 (133 aa).

It belongs to the universal ribosomal protein uS8 family. As to quaternary structure, part of the 30S ribosomal subunit. Contacts proteins S5 and S12.

One of the primary rRNA binding proteins, it binds directly to 16S rRNA central domain where it helps coordinate assembly of the platform of the 30S subunit. This is Small ribosomal subunit protein uS8 from Mycoplasma mobile (strain ATCC 43663 / 163K / NCTC 11711) (Mesomycoplasma mobile).